Consider the following 1551-residue polypeptide: Envelopment polyprotein (1551 aa).

The N-terminal stretch at 1-17 (MSKRVLIIAVVVYLVFT) is a signal peptide. Residues 18–546 (TQNQITGNHT…CRMSSRPTVA (529 aa)) are Lumenal-facing. The disordered stretch occupies residues 24–66 (GNHTTINSSSPSTTEASSTPTVSRTPQTTTTSTAVSTTITATT). N-linked (GlcNAc...) asparagine; by host glycosylation is found at Asn-25 and Asn-30. The span at 31–66 (SSSPSTTEASSTPTVSRTPQTTTTSTAVSTTITATT) shows a compositional bias: low complexity. Residues Asn-80, Asn-142, and Asn-413 are each glycosylated (N-linked (GlcNAc...) asparagine; by host). Residues 547–567 (LLLGIWIGCGYILTCIFSFLL) form a helical membrane-spanning segment. Over 568–675 (YHLILFFANC…ISVGIFLKRT (108 aa)) the chain is Cytoplasmic. The chain crosses the membrane as a helical span at residues 676-696 (TWLVVLLVLLGLAISPVQGAP). The Lumenal portion of the chain corresponds to 697 to 704 (TEVSNVKQ). A helical transmembrane segment spans residues 705–725 (DGDYSICYFIFGCLVTAALLL). The Cytoplasmic portion of the chain corresponds to 726-823 (KVKRTNSNGI…REKLFTTGLQ (98 aa)). A helical transmembrane segment spans residues 824 to 844 (LFINKTNVVVFALIMCFLLLL). The Lumenal portion of the chain corresponds to 845 to 1451 (TGHNASAFDS…GDFFKHYIGS (607 aa)). N-linked (GlcNAc...) asparagine; by host glycans are attached at residues Asn-848, Asn-1201, Asn-1258, and Asn-1420. Cys-1023 and Cys-1216 are joined by a disulfide. Residues 1452–1472 (IAVGVLGTVLPFALLILFFIY) form a helical membrane-spanning segment. Residues 1473–1551 (GDKMLWPFKV…KKEKKLSEIA (79 aa)) are Cytoplasmic-facing.

This sequence belongs to the nairovirus envelope glycoprotein family. In terms of assembly, heterodimer with glycoprotein C; in prefusion state. Heterodimer with glycoprotein N; in prefusion state. Homotrimeric; in postfusion state. Post-translationally, specific enzymatic cleavage by host MBTPS1/S1P/SKI-1 endopeptidase yield glycoprotein N. Specific enzymatic cleavages by host furin-like protease and MBTPS1/S1P endopeptidase yield GP38. In terms of processing, glycosylated.

The protein resides in the host endoplasmic reticulum membrane. It is found in the virion membrane. It localises to the host Golgi apparatus membrane. In terms of biological role, glycoprotein N and glycoprotein C interact with each other and are present at the surface of the virion. Glycoprotein N probably locks the Gn-Gc complex in a prefusion state. Glycoprotein N and glycoprotein C are able to attach the virion to host cell receptors. This attachment induces virion internalization predominantly through clathrin-dependent endocytosis. Glycoprotein C and glycoprotein N interact with each other and are present at the surface of the virion. The spikes at the surface of the virion are formed by an N-terminal extension of glycoprotein C. Glycoprotein N and glycoprotein C are able to attach the virion to host cell receptors. This attachment induces virion internalization predominantly through clathrin-dependent endocytosis. Class II fusion protein that promotes fusion of viral membrane with host endosomal membrane after endocytosis of the virion. Exposure to potassium is necessary for the conformational change leading to fusion. This Amblyomma variegatum (Tropical bont tick) protein is Envelopment polyprotein (GP).